Consider the following 361-residue polypeptide: UDP-3-O-acylglucosamine N-acyltransferase (361 aa).

The active-site Proton acceptor is the H264.

This sequence belongs to the transferase hexapeptide repeat family. LpxD subfamily. In terms of assembly, homotrimer.

It carries out the reaction a UDP-3-O-[(3R)-3-hydroxyacyl]-alpha-D-glucosamine + a (3R)-hydroxyacyl-[ACP] = a UDP-2-N,3-O-bis[(3R)-3-hydroxyacyl]-alpha-D-glucosamine + holo-[ACP] + H(+). It functions in the pathway bacterial outer membrane biogenesis; LPS lipid A biosynthesis. Catalyzes the N-acylation of UDP-3-O-acylglucosamine using 3-hydroxyacyl-ACP as the acyl donor. Is involved in the biosynthesis of lipid A, a phosphorylated glycolipid that anchors the lipopolysaccharide to the outer membrane of the cell. The chain is UDP-3-O-acylglucosamine N-acyltransferase from Bordetella avium (strain 197N).